A 116-amino-acid polypeptide reads, in one-letter code: MRHQLRIPLLSKPADQRKALLRGLTTQLIREGRVTTTKARAKALRNEAERMISLAKEGSLASRRRAIGYIYDKKLVHSLFEKAKERYGDRNGGYTRIVRTVSRKGDNAQMAIIELV.

This sequence belongs to the bacterial ribosomal protein bL17 family. As to quaternary structure, part of the 50S ribosomal subunit. Contacts protein L32.

This is Large ribosomal subunit protein bL17 from Prochlorococcus marinus (strain MIT 9301).